Reading from the N-terminus, the 197-residue chain is MCTGKCARCVGLSLITLCLVCIVANALLLVPNGETSWTNTNHLSLQVWLMGGFIGGGLMVLCPGIAAVRAGGKGCCGAGCCGNRCRMLRSVFSSAFGVLGAIYCLSVSGAGLRNGPRCLMNGEWGYHFEDTAGAYLLNRTLWDRCEAPPRVVPWNVTLFSLLVAASCLEIVLCGIQLVNATIGVFCGDCRKKQDTPH.

Residues 1 to 9 are Cytoplasmic-facing; sequence MCTGKCARC. A helical membrane pass occupies residues 10–30; that stretch reads VGLSLITLCLVCIVANALLLV. The Extracellular portion of the chain corresponds to 31 to 46; the sequence is PNGETSWTNTNHLSLQ. Residues 47 to 67 traverse the membrane as a helical segment; that stretch reads VWLMGGFIGGGLMVLCPGIAA. The Cytoplasmic segment spans residues 68–90; sequence VRAGGKGCCGAGCCGNRCRMLRS. A helical membrane pass occupies residues 91-111; sequence VFSSAFGVLGAIYCLSVSGAG. Residues 91–197 are interaction with MTOR and CASTOR1; that stretch reads VFSSAFGVLG…DCRKKQDTPH (107 aa). Over 112–157 the chain is Extracellular; the sequence is LRNGPRCLMNGEWGYHFEDTAGAYLLNRTLWDRCEAPPRVVPWNVT. 124–129 contributes to the L-arginine binding site; that stretch reads WGYHFE. N-linked (GlcNAc...) asparagine glycosylation is found at Asn138 and Asn155. Residues 158 to 178 form a helical membrane-spanning segment; sequence LFSLLVAASCLEIVLCGIQLV. Topologically, residues 179-197 are cytoplasmic; the sequence is NATIGVFCGDCRKKQDTPH.

It belongs to the L6 tetraspanin family. In terms of assembly, interacts with MTOR; the interaction is positively regulated by arginine and is negatively regulated by leucine. Interacts with SLC38A9. Interacts with SLC7A1; the interaction is negatively regulated by arginine. Interacts with CASTOR1; the interaction is positively regulated by leucine and is negatively regulated by arginine. In terms of tissue distribution, intestine. Overexpressed in pancreatic cancers.

The protein resides in the lysosome membrane. The protein localises to the cell membrane. Its function is as follows. Acts as a lysosomal membrane arginine sensor. Forms a complex with MTOR and SLC38A9 on lysosomal membranes in an arginine-regulated manner, leading to arginine efflux which enables the activation of mTORC1 which subsequently leads to RPS6KB1 and EIF4EBP1 phosphorylations. Facilitates cell cycle G1/S phase progression and the translocation of the CDK4-CCND1 complex into the nucleus. CDKN1B and RHOA/ROCK signaling activity are involved in TM4SF5-mediated acceleration of G1/S phase progression. This is Transmembrane 4 L6 family member 5 (TM4SF5) from Homo sapiens (Human).